The following is a 1373-amino-acid chain: Inactive tyrosine-protein kinase PRAG1 (1373 aa).

Disordered stretches follow at residues 31–50 (AGHP…LPAR) and 197–235 (TSSC…DSEG). Tyrosine 238 is subject to Phosphotyrosine. Composition is skewed to basic and acidic residues over residues 250–263 (DAVH…RRGG) and 272–284 (QGPR…EEKQ). The interval 250–338 (DAVHSTEGSG…SGASSPFAPH (89 aa)) is disordered. A compositionally biased stretch (low complexity) spans 317-333 (SSSDGLSCGSSRSGASS). Phosphotyrosine occurs at positions 343 and 391. 2 disordered regions span residues 376–448 (QPAS…NPAP) and 468–794 (IYLS…LPQK). Residues 419 to 438 (SQGQVWTGDTWIQKTPPSWS) are compositionally biased toward polar residues. Residues 506-522 (RESHPHNVTENTAKEKP) show a composition bias toward basic and acidic residues. Positions 526–538 (PKLSKSSPGGSPV) are enriched in low complexity. Composition is skewed to polar residues over residues 568 to 578 (NLTSSCHTNGV) and 655 to 670 (TSGQ…SKSA). 2 positions are modified to phosphoserine: serine 671 and serine 720. Polar residues-rich tracts occupy residues 711–721 (VSQSSAESLSP) and 729–740 (SFTTGSTDSLAS). Phosphoserine is present on residues serine 757 and serine 802. Residues 804-823 (PDGFFWTQGSPKPRTASPKL) form a disordered region. The tract at residues 911 to 954 (STQLQLHSLLSSISSKEGTYAKLGGLYTQSLARLVTKCEDLFMG) is required for homodimerization. One can recognise a Protein kinase domain in the interval 945–1296 (VTKCEDLFMG…EAKRVLQCLL (352 aa)). The segment covering 1041–1050 (LASPDTSSKD) has biased composition (polar residues). Disordered stretches follow at residues 1041–1062 (LASP…PPAQ) and 1138–1171 (QSSP…QGGP). Low complexity predominate over residues 1139–1167 (SSPGPSATPTVPTTTSRCPSAAPAATTAC). A required for homodimerization region spans residues 1298–1373 (GPRRELVEQP…LQSLKLLQLL (76 aa)).

Belongs to the protein kinase superfamily. As to quaternary structure, homodimer. Dimerization leads to the catalytic activation of CSK. Interacts (via C-terminus) with RND2. Interacts with CSK (via SH2 domain) in a Tyr-391 phosphorylation-dependent manner; this interaction potentiates kinase activity of CSK. Interacts with NOTCH1 intracellular domain (N1ICD). Forms a complex with PRAG1, N1ICD and MAML1, in a MAML1-dependent manner. In terms of processing, phosphorylated by CSK on Tyr-238, Tyr-343, and Tyr-391; Tyr-391 is a primary site of phosphorylation.

Its subcellular location is the cytoplasm. The protein localises to the nucleus. The protein resides in the cell junction. It is found in the focal adhesion. Catalytically inactive protein kinase that acts as a scaffold protein. Functions as an effector of the small GTPase RND2, which stimulates RhoA activity and inhibits NGF-induced neurite outgrowth. Promotes Src family kinase (SFK) signaling by regulating the subcellular localization of CSK, a negative regulator of these kinases, leading to the regulation of cell morphology and motility by a CSK-dependent mechanism. Acts as a critical coactivator of Notch signaling. The protein is Inactive tyrosine-protein kinase PRAG1 of Mus musculus (Mouse).